The sequence spans 708 residues: Leucine-rich repeat neuronal protein 3 (708 aa).

The signal sequence occupies residues 1 to 22; sequence MKDMPLRIHVLLGLAITTLVQA. An LRRNT domain is found at 23–69; that stretch reads VDKKVDCPRLCTCEIRPWFTPRSIYMEASTVDCNDLGLLTFPARLPA. The Extracellular portion of the chain corresponds to 23-628; it reads VDKKVDCPRL…KEYEKNNTTT (606 aa). LRR repeat units lie at residues 70-91, 93-114, 117-138, 141-162, 165-186, 189-210, 213-234, 237-258, 261-282, 285-304, 310-332, and 335-358; these read NTQILLLQTNNIAKIEYSTDFP, NLTGLDLSQNNLSSVTNINVKK, QLLSVYLEENKLTELPEKCLSE, NLQELYINHNLLSTISPGAFIG, NLLRLHLNSNRLQMINSKWFDA, NLEILMIGENPIIRIKDMNFKP, NLRSLVIAGINLTEIPDNALVG, NLESISFYDNRLIKVPHVALQK, NLKFLDLNKNPINRIRRGDFSN, HLKELGINNMPELISIDSLA, DLRKIEATNNPRLSYIHPNAFFR, and KLESLMLNSNALSALYHGTIESLP. N-linked (GlcNAc...) asparagine glycosylation is found at asparagine 93 and asparagine 103. Residue asparagine 223 is glycosylated (N-linked (GlcNAc...) asparagine). The LRRCT domain maps to 368–421; it reads NPIRCDCVIRWMNMNKTNIRFMEPDSLFCVDPPEFQGQNVRQVHFRDMMEICLP. Asparagine 382 carries N-linked (GlcNAc...) asparagine glycosylation. The Ig-like C2-type domain occupies 421–514; it reads PLIAPESFPS…DLKSVMIKVD (94 aa). The cysteines at positions 444 and 496 are disulfide-linked. N-linked (GlcNAc...) asparagine glycans are attached at residues asparagine 522, asparagine 579, asparagine 608, asparagine 624, and asparagine 625. In terms of domain architecture, Fibronectin type-III spans 523-617; that stretch reads GSLNIKIRDI…NVTTKGLHPD (95 aa). A helical transmembrane segment spans residues 629–649; sequence LMACLGGLLGIIGVICLISCL. Residues 650–708 lie on the Cytoplasmic side of the membrane; that stretch reads SPEMNCDGGHSYVRNYLQKPTFALGELYPPLINLWEAGKEKSTSLKVKATVIGLPTNMS.

It is found in the membrane. The sequence is that of Leucine-rich repeat neuronal protein 3 (LRRN3) from Homo sapiens (Human).